Consider the following 548-residue polypeptide: MKMKMKLASFGLAAGLAAQVFLPYNALASTEHVTWNQQFQTPQFISGDLLKVNGTSPEELVYQYVEKNENKFKFHENAKDTLQLKEKKNDNLGFTFMRFQQTYKGIPVFGAVVTSHVKDGTLTALSGTLIPNLDTKGSLKSGKKLSEKQARDIAEKDLVANVTKEVPEYEQGKDTEFVVYVNGDEASLAYVVNLNFLTPEPGNWLYIIDAVDGKILNKFNQLDAAKPGDVKSITGTSTVGVGRGVLGDQKNINTTYSTYYYLQDNTRGNGIFTYDAKYRTTLPGSLWADADNQFFASYDAPAVDAHYYAGVTYDYYKNVHNRLSYDGNNAAIRSSVHYSQGYNNAFWNGSQMVYGDGDGQTFIPLSGGIDVVAHELTHAVTDYTAGLIYQNESGAINEAISDIFGTLVEFYANKNPDWEIGEDVYTPGISGDSLRSMSDPAKYGDPDHYSKRYTGTQDNGGVHINSGIINKAAYLISQGGTHYGVSVVGIGRDKLGKIFYRALTQYLTPTSNFSQLRAAAVQSATDLYGSTSQEVASVKQAFDAVGVK.

The first 28 residues, 1–28 (MKMKMKLASFGLAAGLAAQVFLPYNALA), serve as a signal peptide directing secretion. A propeptide spans 29–232 (STEHVTWNQQ…DAAKPGDVKS (204 aa)) (activation peptide). Ca(2+)-binding residues include aspartate 289, aspartate 291, glutamine 293, and aspartate 370. Histidine 374 contributes to the Zn(2+) binding site. Residue glutamate 375 is part of the active site. The Zn(2+) site is built by histidine 378 and glutamate 398. Glutamate 409, asparagine 415, aspartate 417, glutamate 419, glutamate 422, tyrosine 425, threonine 426, isoleucine 429, and aspartate 432 together coordinate Ca(2+). The Proton donor role is filled by histidine 463.

Belongs to the peptidase M4 family. Requires Ca(2+) as cofactor. It depends on Zn(2+) as a cofactor.

Its subcellular location is the secreted. It catalyses the reaction Preferential cleavage: Xaa-|-Leu &gt; Xaa-|-Phe.. Functionally, extracellular zinc metalloprotease. The polypeptide is Thermolysin (npr) (Bacillus thermoproteolyticus).